Here is a 679-residue protein sequence, read N- to C-terminus: Penicillin-binding protein 1A (679 aa).

Basic residues predominate over residues 1–14 (MTERKREHKDRKQN). The disordered stretch occupies residues 1-20 (MTERKREHKDRKQNKNSPKN). The Cytoplasmic portion of the chain corresponds to 1–30 (MTERKREHKDRKQNKNSPKNQSKVTKFLKW). Residues 31-51 (FFIGILLLGITAVTVVGIYVL) form a helical; Signal-anchor for type II membrane protein membrane-spanning segment. Residues 52–679 (SIIRSSPELD…QYKEVDNLVE (628 aa)) lie on the Extracellular side of the membrane. A transglycosylase region spans residues 72–244 (SILYDDQGNF…PTSYDGLSEA (173 aa)). Glu-111 (proton donor; for transglycosylase activity) is an active-site residue. The transpeptidase stretch occupies residues 378-663 (ASATIIDYKT…TSPIFGKIMG (286 aa)). Ser-417 functions as the Acyl-ester intermediate; for transpeptidase activity in the catalytic mechanism.

It in the N-terminal section; belongs to the glycosyltransferase 51 family. In the C-terminal section; belongs to the transpeptidase family.

The protein localises to the cell membrane. The catalysed reaction is [GlcNAc-(1-&gt;4)-Mur2Ac(oyl-L-Ala-gamma-D-Glu-L-Lys-D-Ala-D-Ala)](n)-di-trans,octa-cis-undecaprenyl diphosphate + beta-D-GlcNAc-(1-&gt;4)-Mur2Ac(oyl-L-Ala-gamma-D-Glu-L-Lys-D-Ala-D-Ala)-di-trans,octa-cis-undecaprenyl diphosphate = [GlcNAc-(1-&gt;4)-Mur2Ac(oyl-L-Ala-gamma-D-Glu-L-Lys-D-Ala-D-Ala)](n+1)-di-trans,octa-cis-undecaprenyl diphosphate + di-trans,octa-cis-undecaprenyl diphosphate + H(+). It catalyses the reaction Preferential cleavage: (Ac)2-L-Lys-D-Ala-|-D-Ala. Also transpeptidation of peptidyl-alanyl moieties that are N-acyl substituents of D-alanine.. The protein operates within cell wall biogenesis; peptidoglycan biosynthesis. In terms of biological role, cell wall formation. Synthesis of cross-linked peptidoglycan from the lipid intermediates. The enzyme has a penicillin-insensitive transglycosylase N-terminal domain (formation of linear glycan strands) and a penicillin-sensitive transpeptidase C-terminal domain (cross-linking of the peptide subunits). This chain is Penicillin-binding protein 1A (pbpA), found in Clostridium perfringens (strain 13 / Type A).